A 300-amino-acid chain; its full sequence is N-acetylmuramic acid 6-phosphate etherase 1 (300 aa).

One can recognise an SIS domain in the interval 57–220 (IATAFAQGGR…TTGAMIKSGK (164 aa)). Residue Glu-85 is the Proton donor of the active site. Glu-116 is a catalytic residue.

Belongs to the GCKR-like family. MurNAc-6-P etherase subfamily. Homodimer.

It carries out the reaction N-acetyl-D-muramate 6-phosphate + H2O = N-acetyl-D-glucosamine 6-phosphate + (R)-lactate. The protein operates within amino-sugar metabolism; 1,6-anhydro-N-acetylmuramate degradation. It functions in the pathway amino-sugar metabolism; N-acetylmuramate degradation. Its pathway is cell wall biogenesis; peptidoglycan recycling. Functionally, specifically catalyzes the cleavage of the D-lactyl ether substituent of MurNAc 6-phosphate, producing GlcNAc 6-phosphate and D-lactate. Together with AnmK, is also required for the utilization of anhydro-N-acetylmuramic acid (anhMurNAc) either imported from the medium or derived from its own cell wall murein, and thus plays a role in cell wall recycling. In Vibrio cholerae serotype O1 (strain ATCC 39315 / El Tor Inaba N16961), this protein is N-acetylmuramic acid 6-phosphate etherase 1.